A 699-amino-acid polypeptide reads, in one-letter code: Probable xyloglucan glycosyltransferase 12 (699 aa).

Helical transmembrane passes span 126–146 and 194–214; these read CLKV…AAYF and IVLF…CFWI. D280 is an active-site residue. Positions 339 and 341 each coordinate substrate. The active site involves D433. 2 consecutive transmembrane segments (helical) span residues 511 to 531 and 536 to 556; these read LILP…TMFV and LPAW…ILPA. Positions 616–646 are disordered; it reads EKTTKHQRGVSAPETEAEKKAEKTKRKKKKH. Residues K617 and K620 each participate in a glycyl lysine isopeptide (Lys-Gly) (interchain with G-Cter in ubiquitin) cross-link. S626 carries the post-translational modification Phosphoserine. Residues 637 to 646 show a composition bias toward basic residues; sequence EKTKRKKKKH. The next 2 membrane-spanning stretches (helical) occupy residues 649-668 and 674-694; these read IYMK…TRSL and IHFY…LDLI.

This sequence belongs to the glycosyltransferase 2 family. Plant cellulose synthase-like C subfamily. In terms of assembly, homodimer. As to expression, mainly expressed in roots, flowers and seeds, and, at very low levels, in seedlings, leaves and stems.

Its subcellular location is the golgi apparatus membrane. Functionally, probable beta-1,4-glucan synthase rather involved in the synthesis of the xyloglucan backbone than cellulose. Seems to work simultaneously with xyloglucan 6-xylosyltransferase. Xyloglucan is a noncellulosic polysaccharides of plant cell wall and consists of a glucan backbone substituted by xylose, galactose and fucose. The polypeptide is Probable xyloglucan glycosyltransferase 12 (Arabidopsis thaliana (Mouse-ear cress)).